Here is a 314-residue protein sequence, read N- to C-terminus: Beta-lactamase 2 (314 aa).

The first 26 residues, 1 to 26 (MLHTRIRRATLGAVAALSLVPVMACG), serve as a signal peptide directing secretion. A compositionally biased stretch (low complexity) spans 32–47 (DAAEPAGSAPSSSAAA). The disordered stretch occupies residues 32 to 51 (DAAEPAGSAPSSSAAAHKPG). S96 serves as the catalytic Acyl-ester intermediate. 258 to 260 (KTG) serves as a coordination point for substrate.

It belongs to the class-A beta-lactamase family.

It carries out the reaction a beta-lactam + H2O = a substituted beta-amino acid. The sequence is that of Beta-lactamase 2 (blaU) from Streptomyces cacaoi.